Consider the following 80-residue polypeptide: Acyl carrier protein (80 aa).

The 76-residue stretch at 4 to 79 (EAILEKVRSI…DAVKYIEDKQ (76 aa)) folds into the Carrier domain. S39 carries the post-translational modification O-(pantetheine 4'-phosphoryl)serine.

This sequence belongs to the acyl carrier protein (ACP) family. 4'-phosphopantetheine is transferred from CoA to a specific serine of apo-ACP by AcpS. This modification is essential for activity because fatty acids are bound in thioester linkage to the sulfhydryl of the prosthetic group.

The protein resides in the cytoplasm. It participates in lipid metabolism; fatty acid biosynthesis. In terms of biological role, carrier of the growing fatty acid chain in fatty acid biosynthesis. The protein is Acyl carrier protein of Prochlorococcus marinus (strain MIT 9313).